Reading from the N-terminus, the 247-residue chain is ATP synthase subunit a, chloroplastic (247 aa).

Transmembrane regions (helical) follow at residues 38-58 (QVLITSWVVIAILLGSATLAV), 95-115 (VPFIGTMFLFIFVSNWSGALL), 134-154 (INTTVALALLTSVAYFYAGIS), 199-219 (LVVVVLVSLVPLVVPIPVMFL), and 220-240 (GLFTSGIQALIFATLAAAYIG).

The protein belongs to the ATPase A chain family. In terms of assembly, F-type ATPases have 2 components, CF(1) - the catalytic core - and CF(0) - the membrane proton channel. CF(1) has five subunits: alpha(3), beta(3), gamma(1), delta(1), epsilon(1). CF(0) has four main subunits: a, b, b' and c.

Its subcellular location is the plastid. The protein localises to the chloroplast thylakoid membrane. In terms of biological role, key component of the proton channel; it plays a direct role in the translocation of protons across the membrane. This chain is ATP synthase subunit a, chloroplastic, found in Daucus carota (Wild carrot).